The chain runs to 300 residues: Actin-related protein 2/3 complex subunit 2-A (300 aa).

Belongs to the ARPC2 family. As to quaternary structure, component of the Arp2/3 complex composed of actr2/arp2, actr3/arp3, arpc1 (arpc1a or arpc1b), arpc2, arpc3, arpc4 and arpc5.

It is found in the cytoplasm. Its subcellular location is the cytoskeleton. The protein resides in the cell projection. The protein localises to the nucleus. In terms of biological role, actin-binding component of the Arp2/3 complex, a multiprotein complex that mediates actin polymerization upon stimulation by nucleation-promoting factor (NPF). The Arp2/3 complex mediates the formation of branched actin networks in the cytoplasm, providing the force for cell motility. In addition to its role in the cytoplasmic cytoskeleton, the Arp2/3 complex also promotes actin polymerization in the nucleus, thereby regulating gene transcription and repair of damaged DNA. The Arp2/3 complex promotes homologous recombination (HR) repair in response to DNA damage by promoting nuclear actin polymerization, leading to drive motility of double-strand breaks (DSBs). The protein is Actin-related protein 2/3 complex subunit 2-A (arpc2-a) of Xenopus laevis (African clawed frog).